The sequence spans 137 residues: Protein PsiE homolog (137 aa).

Transmembrane regions (helical) follow at residues 15–35 (LRIT…AFLI), 55–75 (YYMT…ALIV), 82–102 (FHFP…RFII), and 108–128 (ATST…LFLA).

Belongs to the PsiE family.

Its subcellular location is the cell membrane. The protein is Protein PsiE homolog of Listeria innocua serovar 6a (strain ATCC BAA-680 / CLIP 11262).